A 757-amino-acid chain; its full sequence is Voltage-gated potassium channel KCNC3 (757 aa).

Residues 1–78 are important for normal N-type inactivation; it reads MLSSVCVSSF…CPGLPAAAMG (78 aa). Positions 1–87 are disordered; it reads MLSSVCVSSF…GRHGGGGGDS (87 aa). The Cytoplasmic segment spans residues 1–290; it reads MLSSVCVSSF…EDPYSSRAAR (290 aa). Residues 21–40 show a composition bias toward pro residues; the sequence is PAPPPQPPESPPPPPLPPQQ. Positions 41–52 are enriched in low complexity; sequence QQPAQPGPAASP. Residues H157, C163, C184, and C185 each coordinate Zn(2+). Over residues 210-219 the composition is skewed to low complexity; sequence AANAANAAGA. Residues 210-232 are disordered; it reads AANAANAAGAHDGGLDDEAGAGG. The helical transmembrane segment at 291–309 threads the bilayer; that stretch reads YVAFASLFFILISITTFCL. 2 N-linked (GlcNAc...) asparagine glycosylation sites follow: N320 and N336. The chain crosses the membrane as a helical span at residues 351-370; the sequence is VEGVCVVWFTFEFLMRITFC. The Cytoplasmic segment spans residues 371–379; the sequence is PDKVEFLKS. Residues 380-398 form a helical membrane-spanning segment; that stretch reads SLNIIDCVAILPFYLEVGL. The helical; Voltage-sensor transmembrane segment at 412–434 threads the bilayer; the sequence is FLRVVRFVRILRIFKLTRHFVGL. Residues 435 to 447 lie on the Cytoplasmic side of the membrane; sequence RVLGHTLRASTNE. Residues 448-469 form a helical membrane-spanning segment; that stretch reads FLLLIIFLALGVLIFATMIYYA. N483 is a glycosylation site (N-linked (GlcNAc...) asparagine). Residues T503, L504, G505, and Y506 each contribute to the K(+) site. The Selectivity filter motif lies at 503–508; sequence TLGYGD. A helical membrane pass occupies residues 518-539; that stretch reads LVGALCALAGVLTIAMPVPVIV. Topologically, residues 540–757 are cytoplasmic; sequence NNFGMYYSLA…NANAAAWISP (218 aa). The disordered stretch occupies residues 556–613; that stretch reads PKKKNKHIPRPPQPGSPNYCKPDPPPPPPPHPHHGSGGISPPPPITPPSMGVTVAGAY. Position 625 is an omega-N-methylarginine (R625). Positions 682–746 are disordered; sequence QPAMSPEDKS…KPGPPSFLPD (65 aa). 2 positions are modified to phosphoserine: S686 and S691. Residues 728 to 743 show a composition bias toward pro residues; it reads PPLPPQDWRKPGPPSF.

It belongs to the potassium channel family. C (Shaw) (TC 1.A.1.2) subfamily. Kv3.3/KCNC3 sub-subfamily. In terms of assembly, homotetramer. Heterotetramer with KCNC1. Interacts (via C-terminus) with HAX1; this interaction modulates channel gating. Identified in a complex with ACTR3, a subunit of the Arp2/3 complex; this interaction is indirect and depends on the presence of HAX1. Post-translationally, N-glycosylated.

It localises to the cell membrane. It is found in the presynaptic cell membrane. Its subcellular location is the perikaryon. The protein resides in the cell projection. The protein localises to the axon. It localises to the dendrite. It is found in the dendritic spine membrane. Its subcellular location is the cytoplasm. The protein resides in the cell cortex. The protein localises to the cytoskeleton. The enzyme catalyses K(+)(in) = K(+)(out). Functionally, voltage-gated potassium channel that plays an important role in the rapid repolarization of fast-firing brain neurons. The channel opens in response to the voltage difference across the membrane, forming a potassium-selective channel through which potassium ions pass in accordance with their electrochemical gradient. The channel displays rapid activation and inactivation kinetics. It plays a role in the regulation of the frequency, shape and duration of action potentials in Purkinje cells. Required for normal survival of cerebellar neurons, probably via its role in regulating the duration and frequency of action potentials that in turn regulate the activity of voltage-gated Ca(2+) channels and cellular Ca(2+) homeostasis. Required for normal motor function. Plays a role in the reorganization of the cortical actin cytoskeleton and the formation of actin veil structures in neuronal growth cones via its interaction with HAX1 and the Arp2/3 complex. The protein is Voltage-gated potassium channel KCNC3 (KCNC3) of Homo sapiens (Human).